The following is a 317-amino-acid chain: Secreted frizzled-related protein 5 (317 aa).

A signal peptide spans 1-29 (MRAAAAGGGVRTAALALLLGALHWAPARC). Residues 48-165 (SKPPQCLDIP…PLDNDLCIAV (118 aa)) form the FZ domain. 8 disulfide bridges follow: C53–C116, C63–C109, C100–C135, C124–C162, C128–C152, C181–C253, C184–C255, and C198–C303. Residues 181 to 303 (CAQCEMEHSA…AVKFMFSYPC (123 aa)) enclose the NTR domain.

The protein belongs to the secreted frizzled-related protein (sFRP) family. In terms of tissue distribution, highly expressed in the retinal pigment epithelium (RPE) and pancreas. Weak expression in heart, liver and muscle.

Its subcellular location is the secreted. In terms of biological role, soluble frizzled-related proteins (sFRPS) function as modulators of Wnt signaling through direct interaction with Wnts. They have a role in regulating cell growth and differentiation in specific cell types. SFRP5 may be involved in determining the polarity of photoreceptor, and perhaps, other cells in the retina. The polypeptide is Secreted frizzled-related protein 5 (SFRP5) (Homo sapiens (Human)).